The primary structure comprises 908 residues: DNA polymerase I (908 aa).

Residues 1–318 form the 5'-3' exonuclease domain; sequence MKELYLIDAL…DDINTIDTEN (318 aa). Residues 319–531 form the 3'-5' exonuclease domain; it reads VKYRSITTKI…MEENGIYLDK (213 aa). A polymerase region spans residues 532–908; the sequence is EYLKEYGKEL…ETGKSWGEIH (377 aa).

The protein belongs to the DNA polymerase type-A family.

It carries out the reaction DNA(n) + a 2'-deoxyribonucleoside 5'-triphosphate = DNA(n+1) + diphosphate. In addition to polymerase activity, this DNA polymerase exhibits 3'-5' and 5'-3' exonuclease activity. This Borreliella burgdorferi (strain ATCC 35210 / DSM 4680 / CIP 102532 / B31) (Borrelia burgdorferi) protein is DNA polymerase I (polA).